Reading from the N-terminus, the 473-residue chain is Glutamate--tRNA ligase 2 (473 aa).

A 'HIGH' region motif is present at residues 11 to 21 (PSPTGYLHIGG). Basic and acidic residues predominate over residues 113 to 133 (KARAEGRPPRYDGRWRDRDPS). The interval 113-136 (KARAEGRPPRYDGRWRDRDPSEAP) is disordered. A 'KMSKS' region motif is present at residues 240-244 (KLSKR). An ATP-binding site is contributed by Lys-243.

This sequence belongs to the class-I aminoacyl-tRNA synthetase family. Glutamate--tRNA ligase type 1 subfamily. Monomer.

It localises to the cytoplasm. It catalyses the reaction tRNA(Glu) + L-glutamate + ATP = L-glutamyl-tRNA(Glu) + AMP + diphosphate. Catalyzes the attachment of glutamate to tRNA(Glu) in a two-step reaction: glutamate is first activated by ATP to form Glu-AMP and then transferred to the acceptor end of tRNA(Glu). In Brucella abortus (strain S19), this protein is Glutamate--tRNA ligase 2.